Here is a 111-residue protein sequence, read N- to C-terminus: MRNFITALPIVLLLGFSFVSFMFQFEHLVYFRLALGLFSLVGLYMIYKMKTGIRYFIIYLYASWIVLAAVTAFEEPIFSSFFFGGLVMTMGYLTYMLIYLGMKQDRDANPV.

Transmembrane regions (helical) follow at residues 4–21, 28–47, 51–73, and 80–102; these read FITALPIVLLLGFSFVSF, LVYFRLALGLFSLVGLYMIY, TGIRYFIIYLYASWIVLAAVTAF, and SFFFGGLVMTMGYLTYMLIYLGM.

It localises to the cell membrane. This is an uncharacterized protein from Bacillus subtilis (strain 168).